The primary structure comprises 274 residues: Chromatin modification-related protein YNG2 (274 aa).

The disordered stretch occupies residues glutamate 121–aspartate 194. The span at threonine 166–aspartate 180 shows a compositional bias: basic and acidic residues. The segment at asparagine 215 to glutamate 264 adopts a PHD-type zinc-finger fold. Residues cysteine 218, cysteine 220, cysteine 231, cysteine 236, histidine 242, cysteine 245, cysteine 258, and cysteine 261 each contribute to the Zn(2+) site.

It belongs to the ING family. Interacts with H3K4me3 and to a lesser extent with H3K4me2. Component of the NuA4 histone acetyltransferase complex.

It is found in the nucleus. Component of the NuA4 histone acetyltransferase complex which is involved in transcriptional activation of selected genes principally by acetylation of nucleosomal histone H4 and H2A. The NuA4 complex is also involved in DNA repair. Involved in cell cycle progression and meiosis. This Candida glabrata (strain ATCC 2001 / BCRC 20586 / JCM 3761 / NBRC 0622 / NRRL Y-65 / CBS 138) (Yeast) protein is Chromatin modification-related protein YNG2 (YNG2).